We begin with the raw amino-acid sequence, 441 residues long: Arginine biosynthesis bifunctional protein ArgJ, mitochondrial (441 aa).

A mitochondrion-targeting transit peptide spans 1–8 (MRISSTLL). Thr177, Lys204, Thr215, Glu301, Asn436, and Ser441 together coordinate substrate. Catalysis depends on Thr215, which acts as the Nucleophile.

The protein belongs to the ArgJ family. Heterodimer of an alpha and a beta chain. The alpha and beta chains are autoproteolytically processed from a single precursor protein within the mitochondrion.

Its subcellular location is the mitochondrion matrix. It catalyses the reaction N(2)-acetyl-L-ornithine + L-glutamate = N-acetyl-L-glutamate + L-ornithine. The catalysed reaction is L-glutamate + acetyl-CoA = N-acetyl-L-glutamate + CoA + H(+). Its pathway is amino-acid biosynthesis; L-arginine biosynthesis; L-ornithine and N-acetyl-L-glutamate from L-glutamate and N(2)-acetyl-L-ornithine (cyclic): step 1/1. It participates in amino-acid biosynthesis; L-arginine biosynthesis; N(2)-acetyl-L-ornithine from L-glutamate: step 1/4. Inhibited by ornithine. Functionally, catalyzes two activities which are involved in the cyclic version of arginine biosynthesis: the synthesis of acetylglutamate from glutamate and acetyl-CoA, and of ornithine by transacetylation between acetylornithine and glutamate. This chain is Arginine biosynthesis bifunctional protein ArgJ, mitochondrial, found in Saccharomyces cerevisiae (strain ATCC 204508 / S288c) (Baker's yeast).